A 295-amino-acid chain; its full sequence is METIIEEYLKFIQIEKGLSENTIGAYRRDLKKYQLYMQEQKIAHIDFIDRQTIQECLGSLIDQGASAKSIARFISTIRSFHQFALREKYAAKDPTVLIETPKYEKKLPDVLDVEEVIQLLETPDLTKNNGYRDRTILELLYATGMRVTELIQIEIDDVNLIMGFVKVFGKGNKERIIPLGDTVIEYLDTYINNVRSQLLKKTVTNVLFLNLHGRPLTRQGIWKLIKQYGLRANINKTLTPHTLRHSFATHLLENGADLRAVQEMLGHSDISTTQLYTHVSKTQIRQMYNQFHPRA.

The Core-binding (CB) domain maps to 1 to 85 (METIIEEYLK…TIRSFHQFAL (85 aa)). Positions 106–289 (KLPDVLDVEE…SKTQIRQMYN (184 aa)) constitute a Tyr recombinase domain. Residues R146, K170, H241, R244, and H267 contribute to the active site. The active-site O-(3'-phospho-DNA)-tyrosine intermediate is Y276.

This sequence belongs to the 'phage' integrase family. XerD subfamily. As to quaternary structure, forms a cyclic heterotetrameric complex composed of two molecules of XerC and two molecules of XerD.

Its subcellular location is the cytoplasm. Its function is as follows. Site-specific tyrosine recombinase, which acts by catalyzing the cutting and rejoining of the recombining DNA molecules. The XerC-XerD complex is essential to convert dimers of the bacterial chromosome into monomers to permit their segregation at cell division. It also contributes to the segregational stability of plasmids. The protein is Tyrosine recombinase XerD of Staphylococcus haemolyticus (strain JCSC1435).